A 296-amino-acid chain; its full sequence is tRNA dimethylallyltransferase (296 aa).

Gly2 to Thr9 is a binding site for ATP. Thr4–Thr9 serves as a coordination point for substrate. 3 interaction with substrate tRNA regions span residues Asp27 to Leu30, Gln151 to Arg155, and Arg232 to Arg237.

The protein belongs to the IPP transferase family. Monomer. It depends on Mg(2+) as a cofactor.

The enzyme catalyses adenosine(37) in tRNA + dimethylallyl diphosphate = N(6)-dimethylallyladenosine(37) in tRNA + diphosphate. Catalyzes the transfer of a dimethylallyl group onto the adenine at position 37 in tRNAs that read codons beginning with uridine, leading to the formation of N6-(dimethylallyl)adenosine (i(6)A). This Shewanella woodyi (strain ATCC 51908 / MS32) protein is tRNA dimethylallyltransferase.